Consider the following 83-residue polypeptide: Apolipoprotein C-I, acidic form (83 aa).

The signal sequence occupies residues 1-26 (MRLFLSLPVLVVVLSMVLEGPAPAQG).

This sequence belongs to the apolipoprotein C1 family.

It is found in the secreted. The chain is Apolipoprotein C-I, acidic form (APOC1A) from Gorilla gorilla gorilla (Western lowland gorilla).